A 317-amino-acid chain; its full sequence is Ribosomal protein L11 methyltransferase (317 aa).

4 residues coordinate S-adenosyl-L-methionine: Thr158, Gly179, Asp201, and Asn244.

It belongs to the methyltransferase superfamily. PrmA family.

The protein localises to the cytoplasm. The enzyme catalyses L-lysyl-[protein] + 3 S-adenosyl-L-methionine = N(6),N(6),N(6)-trimethyl-L-lysyl-[protein] + 3 S-adenosyl-L-homocysteine + 3 H(+). Functionally, methylates ribosomal protein L11. The chain is Ribosomal protein L11 methyltransferase from Lactococcus lactis subsp. cremoris (strain SK11).